A 316-amino-acid polypeptide reads, in one-letter code: Ribosomal RNA small subunit methyltransferase H (316 aa).

Residues 32-34 (AGH), D52, F79, D106, and Q113 contribute to the S-adenosyl-L-methionine site.

The protein belongs to the methyltransferase superfamily. RsmH family.

The protein resides in the cytoplasm. The enzyme catalyses cytidine(1402) in 16S rRNA + S-adenosyl-L-methionine = N(4)-methylcytidine(1402) in 16S rRNA + S-adenosyl-L-homocysteine + H(+). In terms of biological role, specifically methylates the N4 position of cytidine in position 1402 (C1402) of 16S rRNA. This Paenibacillus sp. (strain JDR-2) protein is Ribosomal RNA small subunit methyltransferase H.